The primary structure comprises 366 residues: Chorismate synthase (366 aa).

2 residues coordinate NADP(+): Arg-48 and Arg-54. FMN-binding positions include 125–127 (RSS), 238–239 (NA), Gly-278, 293–297 (KPTSS), and Arg-319.

This sequence belongs to the chorismate synthase family. As to quaternary structure, homotetramer. FMNH2 serves as cofactor.

It catalyses the reaction 5-O-(1-carboxyvinyl)-3-phosphoshikimate = chorismate + phosphate. The protein operates within metabolic intermediate biosynthesis; chorismate biosynthesis; chorismate from D-erythrose 4-phosphate and phosphoenolpyruvate: step 7/7. Its function is as follows. Catalyzes the anti-1,4-elimination of the C-3 phosphate and the C-6 proR hydrogen from 5-enolpyruvylshikimate-3-phosphate (EPSP) to yield chorismate, which is the branch point compound that serves as the starting substrate for the three terminal pathways of aromatic amino acid biosynthesis. This reaction introduces a second double bond into the aromatic ring system. The sequence is that of Chorismate synthase from Burkholderia ambifaria (strain ATCC BAA-244 / DSM 16087 / CCUG 44356 / LMG 19182 / AMMD) (Burkholderia cepacia (strain AMMD)).